We begin with the raw amino-acid sequence, 111 residues long: Disintegrin CV-11-alpha (111 aa).

Positions Met1 to Ser20 are cleaved as a signal peptide. A propeptide spanning residues Ile21 to Ala46 is cleaved from the precursor. The Disintegrin domain occupies Met47–Asp111. Cystine bridges form between Cys53–Cys76, Cys67–Cys73, Cys72–Cys97, and Cys85–Cys104. Residues Lys89 to Asp91 carry the Cell attachment site motif.

This sequence belongs to the disintegrin family. Dimeric disintegrin subfamily. As to quaternary structure, heterodimer with subunit beta; disulfide-linked. As to expression, expressed by the venom gland.

The protein resides in the secreted. Inhibits ADP-induced human platelet aggregation. Antagonist of alpha-IIb/beta-3 (ITGA2B/ITGB3). The sequence is that of Disintegrin CV-11-alpha from Cerastes vipera (Sahara sand viper).